The chain runs to 89 residues: Cytochrome c6 (89 aa).

Heme c contacts are provided by Cys15, Cys18, His19, and Met61.

Belongs to the cytochrome c family. PetJ subfamily. In terms of assembly, monomer. Post-translationally, binds 1 heme c group covalently per subunit.

Its subcellular location is the plastid. It localises to the chloroplast thylakoid lumen. Functionally, functions as an electron carrier between membrane-bound cytochrome b6-f and photosystem I in oxygenic photosynthesis. This is Cytochrome c6 (petJ) from Chlorolobion braunii (Green alga).